Here is a 334-residue protein sequence, read N- to C-terminus: Anthranilate phosphoribosyltransferase (334 aa).

5-phospho-alpha-D-ribose 1-diphosphate is bound by residues glycine 79, 82–83 (GD), serine 87, 89–92 (NIST), 107–115 (KHGNRSISS), and serine 119. Glycine 79 provides a ligand contact to anthranilate. Mg(2+) is bound at residue serine 91. Asparagine 110 contributes to the anthranilate binding site. Position 165 (arginine 165) interacts with anthranilate. The Mg(2+) site is built by aspartate 224 and glutamate 225.

The protein belongs to the anthranilate phosphoribosyltransferase family. In terms of assembly, homodimer. It depends on Mg(2+) as a cofactor.

It catalyses the reaction N-(5-phospho-beta-D-ribosyl)anthranilate + diphosphate = 5-phospho-alpha-D-ribose 1-diphosphate + anthranilate. It functions in the pathway amino-acid biosynthesis; L-tryptophan biosynthesis; L-tryptophan from chorismate: step 2/5. Catalyzes the transfer of the phosphoribosyl group of 5-phosphorylribose-1-pyrophosphate (PRPP) to anthranilate to yield N-(5'-phosphoribosyl)-anthranilate (PRA). The protein is Anthranilate phosphoribosyltransferase of Streptococcus pneumoniae (strain ATCC 700669 / Spain 23F-1).